Here is a 355-residue protein sequence, read N- to C-terminus: IGF-like family receptor 1 (355 aa).

The signal sequence occupies residues M1–A22. Over S23 to P163 the chain is Extracellular. Residues K120–W147 are disordered. Over residues A132 to S144 the composition is skewed to low complexity. The chain crosses the membrane as a helical span at residues L164–L184. Topologically, residues W185–A355 are cytoplasmic.

Its subcellular location is the cell membrane. Probable cell membrane receptor for the IGF-like family proteins. Binds IGFL1 and IGFL3 with a higher affinity. May also bind IGFL2. The sequence is that of IGF-like family receptor 1 (IGFLR1) from Homo sapiens (Human).